A 393-amino-acid chain; its full sequence is Bifunctional enzyme Fae/Hps (393 aa).

The segment at 1–161 (MYLIGEALIG…HEKDRAAHAV (161 aa)) is formaldehyde-activating enzyme. His17 serves as the catalytic Proton donor. Asp19, Leu48, Lys66, Thr68, and Gln83 together coordinate substrate. The tract at residues 162 to 393 (MGFKVPRLWD…IDQFRIMTDF (232 aa)) is 3-hexulose-6-phosphate synthase.

The protein in the N-terminal section; belongs to the formaldehyde-activating enzyme family. In the C-terminal section; belongs to the HPS/KGPDC family. HPS subfamily.

It carries out the reaction 5,6,7,8-tetrahydromethanopterin + formaldehyde = 5,10-methylenetetrahydromethanopterin + H2O. It catalyses the reaction D-ribulose 5-phosphate + formaldehyde = D-arabino-hex-3-ulose 6-phosphate. It participates in carbohydrate biosynthesis; D-ribose 5-phosphate biosynthesis. Functionally, catalyzes the condensation of formaldehyde with tetrahydromethanopterin (H(4)MPT) to 5,10-methylenetetrahydromethanopterin. Its function is as follows. Catalyzes the reversible formation of ribulose-5-phosphate and formaldehyde from 3-hexulose-6-phosphate. This Methanospirillum hungatei JF-1 (strain ATCC 27890 / DSM 864 / NBRC 100397 / JF-1) protein is Bifunctional enzyme Fae/Hps.